Reading from the N-terminus, the 531-residue chain is High affinity cysteine transporter (531 aa).

The Cytoplasmic segment spans residues Met1–Lys54. Residues Leu55–Ala75 traverse the membrane as a helical segment. Residues Thr76 to Asn97 are Lumenal-facing. A helical membrane pass occupies residues Thr98–Ala118. Residues Gln119–Lys120 lie on the Cytoplasmic side of the membrane. The helical transmembrane segment at Leu121 to Ser141 threads the bilayer. Topologically, residues Cys142–Arg154 are lumenal. Asn146 carries N-linked (GlcNAc...) asparagine glycosylation. Residues Phe155 to Phe175 traverse the membrane as a helical segment. Over Phe176–Pro186 the chain is Cytoplasmic. Residues Phe187–Leu207 form a helical membrane-spanning segment. Over His208–Lys218 the chain is Lumenal. A helical transmembrane segment spans residues Ile219 to Phe239. Over Pro240 to Asp285 the chain is Cytoplasmic. Residues Tyr286 to Tyr306 traverse the membrane as a helical segment. Over Gln307 to Thr324 the chain is Lumenal. The chain crosses the membrane as a helical span at residues Leu325–Leu345. Residues Ala346–Ser352 are Cytoplasmic-facing. A helical membrane pass occupies residues Ala353–Leu373. Topologically, residues Pro374–Lys378 are lumenal. A helical transmembrane segment spans residues Ile379–Ala399. The Cytoplasmic segment spans residues Leu400–Lys413. Residues Leu414 to Arg436 form a helical membrane-spanning segment. Over Glu437 to Trp447 the chain is Lumenal. Residues Ile448–Ile468 traverse the membrane as a helical segment. Residues Leu469–Asn498 are a coiled coil. Residues Leu469–Leu531 are Cytoplasmic-facing. Phosphoserine occurs at positions 500 and 501.

It belongs to the major facilitator superfamily. Allantoate permease family.

Its subcellular location is the cell membrane. It is found in the endoplasmic reticulum membrane. Its function is as follows. High affinity cysteine-specific transporter. Major contributor to cysteine transport when cysteine, at low concentrations, is provided as the sole sulfur source. In Saccharomyces cerevisiae (strain ATCC 204508 / S288c) (Baker's yeast), this protein is High affinity cysteine transporter (YCT1).